Reading from the N-terminus, the 551-residue chain is Cleavage and polyadenylation specificity factor subunit 6 (551 aa).

The segment at 1–213 (MADGVDHIDI…RGRFPGAVPG (213 aa)) is necessary for interaction with NXF1. Residues 81–161 (IALYIGNLTW…QNPVVTPCNK (81 aa)) form the RRM domain. Residues 81 to 161 (IALYIGNLTW…QNPVVTPCNK (81 aa)) form a necessary for interaction with NUDT21/CPSF5 region. Positions 81–161 (IALYIGNLTW…QNPVVTPCNK (81 aa)) are necessary for nuclear paraspeckles localization. Phosphothreonine is present on T157. Over residues 169–180 (MQSRKTTQSGQM) the composition is skewed to polar residues. 2 disordered regions span residues 169–411 (MQSR…PLSE) and 477–551 (LHGI…YRHR). The GAR motif lies at 202–206 (RGRGR). The segment covering 207–219 (FPGAVPGGDRFPG) has biased composition (low complexity). Composition is skewed to pro residues over residues 220–265 (PAGP…PLAG), 285–366 (GQPP…PPPT), and 377–388 (GPPPTDPYGRPP). The segment at 358 to 551 (NPAFFPPPTN…RDREREYRHR (194 aa)) is (Microbial infection) Binds to HIV-1 capsid protein p24 (CA). Residues 389–404 (PYDRGDYGPPGREMDT) are compositionally biased toward basic and acidic residues. Phosphothreonine occurs at positions 404 and 407. A sufficient for nuclear speckle localization region spans residues 404-551 (TARTPLSEAE…RDREREYRHR (148 aa)). Positions 405-551 (ARTPLSEAEF…RDREREYRHR (147 aa)) are necessary for RNA-binding. The necessary for interaction with SRSF3, SRSF7 and TRA2B/SFRS10 stretch occupies residues 481 to 551 (ESKSYGSGSR…RDREREYRHR (71 aa)). Basic and acidic residues predominate over residues 489–503 (SRRERSRERDHSRSR). An arg/Ser-rich domain region spans residues 490-551 (RRERSRERDH…RDREREYRHR (62 aa)). Phosphoserine is present on residues S494, S500, S511, S513, and S525. Basic residues predominate over residues 504 to 514 (EKSRRHKSRSR). The tract at residues 510–551 (KSRSRDRHDDYYRERSRERERHRDRDRDRDRERDREREYRHR) is sufficient for nuclear targeting. Positions 515 to 551 (DRHDDYYRERSRERERHRDRDRDRDRERDREREYRHR) are enriched in basic and acidic residues.

Belongs to the RRM CPSF6/7 family. As to quaternary structure, component of the cleavage factor Im (CFIm) complex which is a heterotetramer composed of two subunits of NUDT21/CPSF5 and two subunits of CPSF6 or CPSF7 or a heterodimer of CPSF6 and CPSF7. The cleavage factor Im (CFIm) complex associates with the CPSF and CSTF complexes to promote the assembly of the core mRNA 3'-processing machinery. Associates with the exon junction complex (EJC). Associates with the 80S ribosome particle. Interacts (via the RRM domain) with NUDT21/CPSF5; this interaction is direct and enhances binding to RNA. Interacts (via Arg/Ser-rich domain) with FIP1L1 (preferentially via unphosphorylated form and Arg/Glu/Asp-rich domain); this interaction mediates, at least in part, the interaction between the CFIm and CPSF complexes and may be inhibited by CPSF6 hyper-phosphorylation. Interacts (via N-terminus) with NXF1; this interaction is direct. Interacts with SRSF3. Interacts with SRSF7. Interacts with SNRNP70. Interacts with TRA2B/SFRS10. Interacts with UPF1. Interacts with UPF3B. Interacts with VIRMA. Interacts (via Arg/Ser-rich domain) with TNPO3; promoting nuclear import of CPSF6 independently of its phosphorylation status. Interacts with YTHDC1. (Microbial infection) Interacts (via C-terminus) with HIV-1 capsid protein p24 (CA). In terms of processing, phosphorylated. Phosphorylated in the Arg/Ser-rich domain by SRPK1, in vitro. Symmetrically dimethylated on arginine residues in the GAR motif by PRMT5 in a WDR77- and CLNS1A-dependent manner. Asymmetrically dimethylated on arginine residues in the GAR motif by PRMT1.

Its subcellular location is the nucleus. It is found in the nucleoplasm. It localises to the nucleus speckle. The protein resides in the cytoplasm. In terms of biological role, component of the cleavage factor Im (CFIm) complex that functions as an activator of the pre-mRNA 3'-end cleavage and polyadenylation processing required for the maturation of pre-mRNA into functional mRNAs. CFIm contributes to the recruitment of multiprotein complexes on specific sequences on the pre-mRNA 3'-end, so called cleavage and polyadenylation signals (pA signals). Most pre-mRNAs contain multiple pA signals, resulting in alternative cleavage and polyadenylation (APA) producing mRNAs with variable 3'-end formation. The CFIm complex acts as a key regulator of cleavage and polyadenylation site choice during APA through its binding to 5'-UGUA-3' elements localized in the 3'-untranslated region (UTR) for a huge number of pre-mRNAs. CPSF6 enhances NUDT21/CPSF5 binding to 5'-UGUA-3' elements localized upstream of pA signals and promotes RNA looping, and hence activates directly the mRNA 3'-processing machinery. Plays a role in mRNA export. Functionally, (Microbial infection) Binds HIV-1 capsid-nucleocapsid (HIV-1 CA-NC) complexes and might thereby promote the integration of the virus in the nucleus of dividing cells (in vitro). This is Cleavage and polyadenylation specificity factor subunit 6 from Homo sapiens (Human).